A 139-amino-acid chain; its full sequence is Endoribonuclease YbeY (139 aa).

Positions 107, 111, and 117 each coordinate Zn(2+).

It belongs to the endoribonuclease YbeY family. The cofactor is Zn(2+).

Its subcellular location is the cytoplasm. Functionally, single strand-specific metallo-endoribonuclease involved in late-stage 70S ribosome quality control and in maturation of the 3' terminus of the 16S rRNA. The protein is Endoribonuclease YbeY of Bacteroides fragilis (strain ATCC 25285 / DSM 2151 / CCUG 4856 / JCM 11019 / LMG 10263 / NCTC 9343 / Onslow / VPI 2553 / EN-2).